The chain runs to 660 residues: MEVLDATGLAERLRWEDNDYLLHLKAETSFDKYPAKQHARRVQAELGVEDGLIYLPGQPARNNEDSDMPAPFRQRRYFYYMSGCDEPDCHLMYDIRRDVLTLFIPRIKPERVIWNGRGSTPAEALAKYDIDQVHHSQDLAYIIQNWAFKHQNTGIYILHPSSRIPGCDNLMPRIDSHSLQPAMNLCRMIKDDHEIKRIRKANDISSQAHREVLANIQKYKNEAQVEGLFMDVCISRQAKQQAYDPIAASGPNAGTLHYDANNEDLAGRQLMCLDAGCEFELYASDITRTFPLSASWPSKEAENIYNLVQRMQETCIERLEPGVRYLDLHIMAHQVAIDGLLRLGILCNGTREEIYKAGTSRAFFPHGLGHHIGLEVHDVGQAELMSVRRGKPVYQQAPSLYPENFHDPVYDSETCHAPTDPQSSHLEEGMVVTVEPGIYFSVYALQHFYLPSPIHSKFINLEVLERYLPVGGVRIEDDILITANGHENLTTAPKGEAMLDMIRQGKPGTTDVLIPSPTYSRRMRSENNTPRLCAPGISKNTLRPLLTPLARAATLPTEFRQQDDFDFEPTVGPSLFSGFSRAMTTEEKIQQWKQKRDSVPVALNRPTKAKSLSPVCGENTPNVQHVYMSTASDLASFSQLSAGSGSTPLWKPHNKQDKKN.

Mn(2+)-binding residues include D274, D285, E435, and E476. Positions 641 to 660 are disordered; the sequence is SAGSGSTPLWKPHNKQDKKN.

Belongs to the peptidase M24B family. Requires Mn(2+) as cofactor.

The catalysed reaction is Release of any N-terminal amino acid, including proline, that is linked to proline, even from a dipeptide or tripeptide.. Catalyzes the removal of a penultimate prolyl residue from the N-termini of peptides. The polypeptide is Probable Xaa-Pro aminopeptidase PTRG_10574 (Pyrenophora tritici-repentis (strain Pt-1C-BFP) (Wheat tan spot fungus)).